The primary structure comprises 925 residues: Aspulvinone E synthetase melA (925 aa).

The adenylation (A) domain stretch occupies residues 11-434; that stretch reads ETAAARNGDG…GGRAKETIII (424 aa). A Carrier domain is found at 564–644; that stretch reads SPKNDFEKGL…ELAAALDNLY (81 aa). The residue at position 601 (S601) is an O-(pantetheine 4'-phosphoryl)serine. Positions 663–923 are thioesterase (TE) domain; sequence PLWLVHPGAG…KILRSALAER (261 aa).

It belongs to the ATP-dependent AMP-binding enzyme family.

Its subcellular location is the cytoplasm. In terms of biological role, nonribosomal peptide synthase; part of the gene cluster that mediates the biosynthesis of Asp-melanin, a pigment that confers resistance against UV light and hampers phagocytosis by soil amoeba. The nonribosomal peptide synthase melA converts 4-hydroxyphenylpyruvate (4-HPPA) to aspulvinone E. The tyrosinase tyrP then performs hydroxylations of both aromatic moieties of aspulvinone E. The product of tyrP is highly unstable, and, due to the high reactivity of methides and ortho-diquinones, the polymeric Asp-melanin forms spontaneously. The polypeptide is Aspulvinone E synthetase melA (Aspergillus terreus).